We begin with the raw amino-acid sequence, 457 residues long: Protein trichome birefringence-like 4 (457 aa).

The chain crosses the membrane as a helical; Signal-anchor for type II membrane protein span at residues 19 to 37 (IFLTSLFFLSLFLLSSSSL). The GDS motif signature appears at 173-175 (GDS). Residues 420–434 (DCSHWCLPGVPDSWN) carry the DCXHWCLPGXXDXWN motif motif.

It belongs to the PC-esterase family. TBL subfamily.

Its subcellular location is the membrane. Its function is as follows. May act as a bridging protein that binds pectin and other cell wall polysaccharides. Probably involved in maintaining esterification of pectins. May be involved in the specific O-acetylation of cell wall polymers. The chain is Protein trichome birefringence-like 4 (TBL4) from Arabidopsis thaliana (Mouse-ear cress).